Reading from the N-terminus, the 798-residue chain is Integrin beta-1 (798 aa).

Positions 1 to 20 (MNLQLIFWIGLISSICCVFG) are cleaved as a signal peptide. The Extracellular segment spans residues 21-728 (QADENRCLKA…ETPECPTGPD (708 aa)). One can recognise a PSI domain in the interval 26–76 (RCLKANAKSCGECIQAGPNCGWCVNSTFLQEGMPTSARCDDLEALKKKGCH). Intrachain disulfides connect C27/C45, C35/C464, C38/C64, C48/C75, C207/C213, C261/C301, C401/C415, C435/C462, C466/C486, C477/C489, C491/C500, C502/C533, C516/C531, C525/C536, C538/C553, C555/C576, C560/C574, C568/C579, C581/C590, C592/C615, C599/C613, C607/C618, C620/C630, C633/C636, C640/C691, C646/C665, C649/C661, and C699/C723. N-linked (GlcNAc...) asparagine glycosylation is present at N50. The segment covering 75 to 91 (CHPDDIENPRGSKDVKK) has biased composition (basic and acidic residues). The interval 75–107 (CHPDDIENPRGSKDVKKNKNVTNRSKGTAEKLQ) is disordered. N94 and N97 each carry an N-linked (GlcNAc...) asparagine glycan. The region spanning 140-378 (DYPIDLYYLM…QLIIDAYNSL (239 aa)) is the VWFA domain. Residues S152 and S154 each coordinate Mg(2+). The Ca(2+) site is built by S154, D157, D158, and E189. The segment at 207–213 (CTSEQNC) is CX3CL1-binding. N-linked (GlcNAc...) asparagine glycosylation is present at N212. The Ca(2+) site is built by N244, D246, P248, and E249. E249 lines the Mg(2+) pocket. N269 carries an N-linked (GlcNAc...) asparagine glycan. The tract at residues 295–314 (LPNDGQCHLENDVYTMSHYY) is CX3CL1-binding. Residue A362 participates in Ca(2+) binding. 3 N-linked (GlcNAc...) asparagine glycosylation sites follow: N363, N406, and N417. Residues 383–465 (ILENSKLPEG…IILQFICECE (83 aa)) are interaction with TMEM182. I-EGF domains are found at residues 466–501 (CQNE…RHCE), 502–554 (CSTD…KFCE), 555–591 (CDNF…SACD), and 592–631 (CSLD…PTCE). An N-linked (GlcNAc...) asparagine glycan is attached at N481. N-linked (GlcNAc...) asparagine glycosylation occurs at N520. N584 is a glycosylation site (N-linked (GlcNAc...) asparagine). Residue N669 is glycosylated (N-linked (GlcNAc...) asparagine). A helical membrane pass occupies residues 729 to 751 (IIPIVAGVVAGIVLIGLALLLIW). Topologically, residues 752–798 (KLLMIIHDTREFAKFEKEKMNAKWDTGENPIYKSAVTTVVNPKYEGK) are cytoplasmic. The signal for sorting from recycling endosomes; interaction with ACAP1 stretch occupies residues 762–767 (EFAKFE). At T777 the chain carries Phosphothreonine. Residue Y783 is modified to Phosphotyrosine. S785 carries the post-translational modification Phosphoserine. The interval 785–792 (SAVTTVVN) is interaction with ITGB1BP1. Phosphothreonine is present on T789. The residue at position 794 (K794) is an N6-acetyllysine; alternate. K794 participates in a covalent cross-link: Glycyl lysine isopeptide (Lys-Gly) (interchain with G-Cter in SUMO1); alternate.

It belongs to the integrin beta chain family. As to quaternary structure, interacts with seprase FAP (seprase); the interaction occurs at the cell surface of invadopodia membrane in a collagen-dependent manner. Heterodimer of an alpha and a beta subunit. Beta-1 associates with either alpha-1, alpha-2, alpha-3, alpha-4, alpha-5, alpha-6, alpha-7, alpha-8, alpha-9, alpha-10, alpha-11 or alpha-V. ITGA6:ITGB1 is found in a complex with CD9; interaction takes place in oocytes and is involved in sperm-egg fusion. Binds LGALS3BP and NMRK2, when associated with alpha-7, but not with alpha-5. Interacts with FLNA, FLNB, FLNC and RANBP9. Interacts with KRT1 in the presence of RACK1 and SRC. Interacts with JAML; integrin alpha-4/beta-1 may regulate leukocyte to endothelial cells adhesion by controlling JAML homodimerization. Interacts with RAB21. Interacts (via the cytoplasmic region) with RAB25 (via the hypervariable C-terminal region). Interacts with MYO10. Interacts with ITGB1BP1 (via C-terminal region); the interaction is a prerequisite for focal adhesion disassembly. Interacts with TLN1; the interaction is prevented by competitive binding of ITGB1BP1. Interacts with ACAP1; required for ITGB1 recycling. Interacts with ASAP3. Interacts with FERMT2; the interaction is inhibited in presence of ITGB1BP1. Interacts with DAB2. Interacts with FGR and HCK. Interacts with alpha-7A and alpha-7B in adult skeletal muscle. Interacts with alpha-7B in cardiomyocytes of adult heart. Interacts with EMP2; the interaction may be direct or indirect and ITGB1 has a heterodimer form. ITGA5:ITGB1 interacts with CCN3. ITGA4:ITGB1 is found in a ternary complex with CX3CR1 and CX3CL1. ITGA5:ITGB1 interacts with FBN1. ITGA5:ITGB1 acts as a receptor for fibronectin FN1 and mediates R-G-D-dependent cell adhesion to FN1. ITGA5:ITGB1 interacts with IL1B. Interacts with MDK. ITGA4:ITGB1 interacts with MDK; this interaction mediates MDK-induced osteoblast cells migration through PXN phosphorylation. ITGA6:ITGB1 interacts with MDK; this interaction mediates MDK-induced neurite-outgrowth. ITGA5:ITGB1 interacts with ACE2. Interacts with TMEM182 and LAMB1. Interacts with tensin TNS3; TNS3 also interacts with PEAK1, thus acting as an adapter molecule to bridge the association of PEAK1 with ITGB1. Interacts with tensin TNS4; the interaction displaces tensin TNS3 from the ITGB1 cytoplasmic tail and promotes ITGB1 stability. Integrin ITGA9:ITGB1 interacts with SPP1/OPN (via N-terminus). Integrin ITGA9:ITGB1 interacts with TNC/TNFN3 (via the 3rd Fibronectin type-III domain). Integrins ITGA4:ITGB1 and ITGA9:ITGB1 interact with SVEP1 (via Sushi domain 21); thereby inhibit Ca(2+) intracellular signaling and as a result repress vasocontraction. ITGA4:ITGB1 and ITGA5:ITGB1 interacts with SELP. Interacts with CD248. ITGA5:ITGB1 interacts with IGFBP1. ITGA4:ITGB1 interacts with BCAM. Interacts with ADGRG6.

The protein localises to the cell membrane. It localises to the cell projection. Its subcellular location is the invadopodium membrane. The protein resides in the ruffle membrane. It is found in the recycling endosome. The protein localises to the melanosome. It localises to the lamellipodium. Its subcellular location is the ruffle. The protein resides in the cell junction. It is found in the focal adhesion. Integrins alpha-1/beta-1, alpha-2/beta-1, alpha-10/beta-1 and alpha-11/beta-1 are receptors for collagen. Integrins alpha-1/beta-1 and alpha-2/beta-2 recognize the proline-hydroxylated sequence G-F-P-G-E-R in collagen. Integrins alpha-2/beta-1, alpha-3/beta-1, alpha-4/beta-1, alpha-5/beta-1, alpha-8/beta-1, alpha-10/beta-1, alpha-11/beta-1 and alpha-V/beta-1 are receptors for fibronectin. Alpha-4/beta-1 recognizes one or more domains within the alternatively spliced CS-1 and CS-5 regions of fibronectin. Integrin alpha-5/beta-1 is a receptor for fibrinogen. Integrin alpha-1/beta-1, alpha-2/beta-1, alpha-6/beta-1 and alpha-7/beta-1 are receptors for lamimin. Integrin alpha-6/beta-1 (ITGA6:ITGB1) is present in oocytes and is involved in sperm-egg fusion. Integrin alpha-4/beta-1 is a receptor for VCAM1 and recognizes the sequence Q-I-D-S in VCAM1. Integrin alpha-9/beta-1 is a receptor for VCAM1, cytotactin and osteopontin. It recognizes the sequence A-E-I-D-G-I-E-L in cytotactin. Integrin alpha-3/beta-1 is a receptor for epiligrin, thrombospondin and CSPG4. Integrin alpha-3/beta-1 provides a docking site for FAP (seprase) at invadopodia plasma membranes in a collagen-dependent manner and hence may participate in the adhesion, formation of invadopodia and matrix degradation processes, promoting cell invasion. Alpha-3/beta-1 may mediate with LGALS3 the stimulation by CSPG4 of endothelial cells migration. Integrin alpha-V/beta-1 is a receptor for vitronectin. Beta-1 integrins recognize the sequence R-G-D in a wide array of ligands. When associated with alpha-7/beta-1 integrin, regulates cell adhesion and laminin matrix deposition. Involved in promoting endothelial cell motility and angiogenesis. Involved in osteoblast compaction through the fibronectin fibrillogenesis cell-mediated matrix assembly process and the formation of mineralized bone nodules. May be involved in up-regulation of the activity of kinases such as PKC via binding to KRT1. Together with KRT1 and RACK1, serves as a platform for SRC activation or inactivation. Plays a mechanistic adhesive role during telophase, required for the successful completion of cytokinesis. ITGA4:ITGB1 binds to fractalkine (CX3CL1) and may act as its coreceptor in CX3CR1-dependent fractalkine signaling. ITGA4:ITGB1 and ITGA5:ITGB1 bind to PLA2G2A via a site (site 2) which is distinct from the classical ligand-binding site (site 1) and this induces integrin conformational changes and enhanced ligand binding to site 1. ITGA5:ITGB1 acts as a receptor for fibrillin-1 (FBN1) and mediates R-G-D-dependent cell adhesion to FBN1. ITGA5:ITGB1 is a receptor for IL1B and binding is essential for IL1B signaling. ITGA5:ITGB3 is a receptor for soluble CD40LG and is required for CD40/CD40LG signaling. Plays an important role in myoblast differentiation and fusion during skeletal myogenesis. ITGA9:ITGB1 may play a crucial role in SVEP1/polydom-mediated myoblast cell adhesion. Integrins ITGA9:ITGB1 and ITGA4:ITGB1 repress PRKCA-mediated L-type voltage-gated channel Ca(2+) influx and ROCK-mediated calcium sensitivity in vascular smooth muscle cells via their interaction with SVEP1, thereby inhibit vasocontraction. The chain is Integrin beta-1 (ITGB1) from Felis catus (Cat).